The chain runs to 962 residues: Protease 3 (962 aa).

Positions 1-23 (MPRSTWFKALLLFVALWAPLSQA) are cleaved as a signal peptide. Histidine 88 is a Zn(2+) binding site. Glutamate 91 functions as the Proton acceptor in the catalytic mechanism. Zn(2+)-binding residues include histidine 92 and glutamate 169.

The protein belongs to the peptidase M16 family. As to quaternary structure, monomer. Zn(2+) serves as cofactor.

Its subcellular location is the periplasm. The catalysed reaction is Preferential cleavage of 16-Tyr-|-Leu-17 and 25-Phe-|-Tyr-26 bonds of oxidized insulin B chain. Also acts on other substrates of Mw less than 7 kDa such as insulin and glucagon.. Endopeptidase that degrades small peptides of less than 7 kDa, such as glucagon and insulin. The sequence is that of Protease 3 (ptrA) from Shigella flexneri.